A 439-amino-acid chain; its full sequence is Glucan 1,3-beta-glucosidase (439 aa).

An N-terminal signal peptide occupies residues Met-1–Thr-18. The Proton donor role is filled by Glu-227. Cystine bridges form between Cys-311–Cys-437 and Cys-336–Cys-366. Glu-328 (nucleophile) is an active-site residue.

This sequence belongs to the glycosyl hydrolase 5 (cellulase A) family.

The protein localises to the secreted. It carries out the reaction Successive hydrolysis of beta-D-glucose units from the non-reducing ends of (1-&gt;3)-beta-D-glucans, releasing alpha-glucose.. In terms of biological role, beta-glucanases participate in the metabolism of beta-glucan, the main structural component of the cell wall. It could also function biosynthetically as a transglycosylase. This chain is Glucan 1,3-beta-glucosidase (EXG1), found in Lachancea kluyveri (strain ATCC 58438 / CBS 3082 / BCRC 21498 / NBRC 1685 / JCM 7257 / NCYC 543 / NRRL Y-12651) (Yeast).